A 122-amino-acid chain; its full sequence is Urocortin (122 aa).

The signal sequence occupies residues Met-1–Gln-25. Positions Trp-26 to Arg-80 are excised as a propeptide. Position 120 is a valine amide (Val-120).

The protein belongs to the sauvagine/corticotropin-releasing factor/urotensin I family. Interacts with CRHR1 and CRHR2 (via their N-terminal extracellular domain). In the organ of Corti, detected in the inner hair cell region (at protein level). Expressed in skin (at protein level).

Its subcellular location is the secreted. Its function is as follows. Acts in vitro to stimulate the secretion of adrenocorticotropic hormone (ACTH). Binds with high affinity to CRF receptor types 1, 2-alpha, and 2-beta. Plays a role in the establishment of normal hearing thresholds. Reduces food intake and regulates ghrelin levels in gastric body and plasma. This chain is Urocortin (Ucn), found in Mus musculus (Mouse).